A 487-amino-acid polypeptide reads, in one-letter code: Glutamyl-tRNA(Gln) amidotransferase subunit A (487 aa).

Residues K79 and S158 each act as charge relay system in the active site. The active-site Acyl-ester intermediate is the S182.

Belongs to the amidase family. GatA subfamily. In terms of assembly, heterotrimer of A, B and C subunits.

It catalyses the reaction L-glutamyl-tRNA(Gln) + L-glutamine + ATP + H2O = L-glutaminyl-tRNA(Gln) + L-glutamate + ADP + phosphate + H(+). Functionally, allows the formation of correctly charged Gln-tRNA(Gln) through the transamidation of misacylated Glu-tRNA(Gln) in organisms which lack glutaminyl-tRNA synthetase. The reaction takes place in the presence of glutamine and ATP through an activated gamma-phospho-Glu-tRNA(Gln). The sequence is that of Glutamyl-tRNA(Gln) amidotransferase subunit A from Ehrlichia chaffeensis (strain ATCC CRL-10679 / Arkansas).